The primary structure comprises 192 residues: Ion-translocating oxidoreductase complex subunit B (192 aa).

Positions 1 to 26 (MNAFWIAVAAVSLLGLAFGAILGYAS) are hydrophobic. The 4Fe-4S domain maps to 32–91 (EDDPVVEKIDEILPQSQCGQCGYPGCRPYAEAISCNGEKINRCAPGGEAVMLKIAELLNV). [4Fe-4S] cluster-binding residues include Cys-49, Cys-52, Cys-57, Cys-74, Cys-117, Cys-120, Cys-123, Cys-127, Cys-147, Cys-150, Cys-153, and Cys-157. 4Fe-4S ferredoxin-type domains lie at 108-137 (MVAV…GATR) and 138-167 (AMHT…LQPV).

This sequence belongs to the 4Fe4S bacterial-type ferredoxin family. RnfB subfamily. In terms of assembly, the complex is composed of six subunits: RsxA, RsxB, RsxC, RsxD, RsxE and RsxG. The cofactor is [4Fe-4S] cluster.

The protein localises to the cell inner membrane. Functionally, part of a membrane-bound complex that couples electron transfer with translocation of ions across the membrane. Required to maintain the reduced state of SoxR. The chain is Ion-translocating oxidoreductase complex subunit B from Escherichia coli O6:H1 (strain CFT073 / ATCC 700928 / UPEC).